We begin with the raw amino-acid sequence, 342 residues long: Dihydroorotase (342 aa).

Residues H13 and H15 each coordinate Zn(2+). Substrate-binding positions include 15-17 (HLR) and N41. Zn(2+)-binding residues include K98, H135, and H173. K98 carries the post-translational modification N6-carboxylysine. Substrate is bound at residue H135. Residue L218 coordinates substrate. Position 246 (D246) interacts with Zn(2+). D246 is a catalytic residue. Residues H250 and A262 each contribute to the substrate site.

The protein belongs to the metallo-dependent hydrolases superfamily. DHOase family. Class II DHOase subfamily. As to quaternary structure, homodimer. Zn(2+) serves as cofactor.

It carries out the reaction (S)-dihydroorotate + H2O = N-carbamoyl-L-aspartate + H(+). It functions in the pathway pyrimidine metabolism; UMP biosynthesis via de novo pathway; (S)-dihydroorotate from bicarbonate: step 3/3. Catalyzes the reversible cyclization of carbamoyl aspartate to dihydroorotate. The polypeptide is Dihydroorotase (Photobacterium profundum (strain SS9)).